Here is a 787-residue protein sequence, read N- to C-terminus: Pleckstrin homology domain-containing family G member 6 (787 aa).

Residues 161–353 (HQQEALWELL…ESFLRHINGQ (193 aa)) form the DH domain. Positions 409-509 (QLLLEGPVRV…WLEKTQHAQT (101 aa)) constitute a PH domain. The tract at residues 533-762 (QGTESPSTRP…EPGNGKPRRL (230 aa)) is disordered. Residues 535–557 (TESPSTRPSTPSPSPEDSQSSAE) show a composition bias toward low complexity. Residues 724–742 (LRPRSLREDMLREIREELA) are compositionally biased toward basic and acidic residues.

Interacts with MYH10. Interacts with ELMO1 and EZR (in an open conformation). Interacts with CSPP1.

Its subcellular location is the cell projection. It is found in the microvillus. The protein localises to the cytoplasm. The protein resides in the cytoskeleton. It localises to the spindle. Its subcellular location is the cleavage furrow. Its function is as follows. Guanine nucleotide exchange factor activating the small GTPase RHOA, which, in turn, induces myosin filament formation. Also activates RHOG. Does not activate RAC1, or to a much lower extent than RHOA and RHOG. Part of a functional unit, involving PLEKHG6, MYH10 and RHOA, at the cleavage furrow to advance furrow ingression during cytokinesis. In epithelial cells, required for the formation of microvilli and membrane ruffles on the apical pole. Along with EZR, required for normal macropinocytosis. The chain is Pleckstrin homology domain-containing family G member 6 (Plekhg6) from Mus musculus (Mouse).